Consider the following 185-residue polypeptide: Neuronal vesicle trafficking-associated protein 1 (185 aa).

Residues 1–82 (MVKLGNNFSE…ITEGVSERFK (82 aa)) are Cytoplasmic-facing. A helical; Signal-anchor for type II membrane protein membrane pass occupies residues 83-103 (VTVLVLFALAFLTCVVFLVVY). Over 104–185 (KVYKYDHTCP…QETEAAEKSA (82 aa)) the chain is Lumenal.

Belongs to the NSG family.

The protein localises to the membrane. It is found in the golgi apparatus. Its subcellular location is the trans-Golgi network membrane. It localises to the endosome membrane. The protein resides in the cell projection. The protein localises to the dendrite. It is found in the early endosome membrane. Its subcellular location is the late endosome membrane. It localises to the lysosome lumen. The protein resides in the recycling endosome membrane. The protein localises to the cytoplasmic vesicle membrane. It is found in the golgi stack membrane. Its subcellular location is the endosome. It localises to the multivesicular body membrane. Functionally, plays a role in the recycling mechanism in neurons of multiple receptors and acts at the level of early endosomes to promote sorting of receptors toward a recycling pathway. The protein is Neuronal vesicle trafficking-associated protein 1 of Gallus gallus (Chicken).